Consider the following 277-residue polypeptide: Myelin proteolipid protein (277 aa).

Residues 2–10 (GLLECCARC) lie on the Cytoplasmic side of the membrane. 3 S-palmitoyl cysteine lipidation sites follow: C6, C7, and C10. Residues 11 to 36 (LIGAPFASLVATGLCFFGVALFCGCG) form a helical membrane-spanning segment. At 37-59 (HEALTGTEQLIETYFSKNYQDYE) the chain is on the extracellular side. The helical transmembrane segment at 60-88 (FLIDVIHGFQYFIYGTAAFFFLYGALLLA) threads the bilayer. At 89–151 (EGFYTTGAVR…LGKWLGHPDK (63 aa)) the chain is on the cytoplasmic side. S-palmitoyl cysteine attachment occurs at residues C109, C139, and C141. The helical transmembrane segment at 152–178 (FVGITYVLTIIWLLVFACSAVPVYIYF) threads the bilayer. Topologically, residues 179-238 (NTWTTCQSIGNPTKTSASIGTLCADARMYGILPWNAFPGKVCGSNLLSICKTSEFQMTFH) are extracellular. 2 disulfides stabilise this stretch: C184/C228 and C201/C220. T199 carries the O-palmitoyl threonine lipid modification. Residues 239–268 (LFIAAFVGAAATLVSLVTFIIATTYNFAVL) traverse the membrane as a helical segment. Over 269–277 (RLMGRGTKF) the chain is Cytoplasmic.

The protein belongs to the myelin proteolipid protein family.

It localises to the cell membrane. Its function is as follows. This is the major myelin protein from the central nervous system. It plays an important role in the formation or maintenance of the multilamellar structure of myelin. This Taeniopygia guttata (Zebra finch) protein is Myelin proteolipid protein (PLP1).